We begin with the raw amino-acid sequence, 1091 residues long: LRR receptor-like serine/threonine-protein kinase RGI3 (1091 aa).

A signal peptide spans 1–24 (MPPNIYRLSFFSSLLCFFFIPCFS). Over 25-703 (LDQQGQALLS…TTRNSSVVRL (679 aa)) the chain is Extracellular. One copy of the LRR 1 repeat lies at 33 to 56 (LSWKSQLNISGDAFSSWHVADTSP). Asparagine 40 is a glycosylation site (N-linked (GlcNAc...) asparagine). The cysteines at positions 57 and 64 are disulfide-linked. LRR repeat units follow at residues 67–91 (RGEV…SLRS), 92–115 (LKSL…EIGD), 116–140 (FTEL…IFRL), 142–166 (KLKT…NLSG), 168–188 (VELM…IGEL), 190–213 (NLQV…IGNC), 214–237 (ENLV…IGNL), 239–261 (RVQT…IGYC), 262–285 (TELQ…IGGL), 287–309 (KLQS…LGNC), 311–332 (ELWL…SFGK), 333–357 (LENL…LTNC), 359–383 (KLTH…NLRS), 385–405 (TMFF…LSQC), 406–429 (RELQ…IFGL), 431–453 (NLTK…IGNC), 454–477 (TNLY…IGNL), 478–501 (KNLN…ISGC), 503–524 (SLEF…TTLP), 525–548 (KSLK…IGLL), 549–572 (TELT…ISTC), 574–596 (SLQL…LGQI), 598–620 (SLAI…RFSD), 621–644 (LKNL…LTDL), 645–668 (QNLV…PFFR), and 669–690 (RLPL…ISTR). Asparagine 104 is a glycosylation site (N-linked (GlcNAc...) asparagine). An N-linked (GlcNAc...) asparagine glycan is attached at asparagine 163. 5 short sequence motifs (small peptide recognition) span residues 173–174 (FD), 195–198 (RAGG), 218–223 (MLGLAE), tyrosine 246, and 268–270 (YLY). 2 consecutive short sequence motifs (small peptide recognition) follow at residues 316 to 319 (DFSE) and 338 to 340 (ELQ). Asparagine 356 is a glycosylation site (N-linked (GlcNAc...) asparagine). 2 consecutive short sequence motifs (small peptide recognition) follow at residues 386-390 (MFFAW) and 412-415 (DLSY). N-linked (GlcNAc...) asparagine glycosylation is present at asparagine 431. A Small peptide recognition motif is present at residues 434 to 438 (KLLLL). A glycan (N-linked (GlcNAc...) asparagine) is linked at asparagine 452. Positions 458 to 460 (RLR) match the Small peptide recognition motif. Asparagine 604 carries an N-linked (GlcNAc...) asparagine glycan. A glycan (N-linked (GlcNAc...) asparagine) is linked at asparagine 651. Residue asparagine 697 is glycosylated (N-linked (GlcNAc...) asparagine). The chain crosses the membrane as a helical span at residues 704–724 (TILILVVVTAVLVLMAVYTLV). Residues 725-1091 (RARAAGKQLL…CSFAFSDDSV (367 aa)) are Cytoplasmic-facing. The 287-residue stretch at 760 to 1046 (LTSANVIGTG…MLTEIRHIDV (287 aa)) folds into the Protein kinase domain. ATP-binding positions include 766–774 (IGTGSSGVV) and lysine 788. Tyrosine 831 and tyrosine 870 each carry phosphotyrosine. Catalysis depends on aspartate 883, which acts as the Proton acceptor. The residue at position 933 (tyrosine 933) is a Phosphotyrosine.

The protein belongs to the protein kinase superfamily. Ser/Thr protein kinase family. As to quaternary structure, binds to RGF peptides such as RGF1, GLV5/CLEL1/RGF2, GLV7/CLEL3/RGF3, GLV3/RGF4, GLV10/CLEL7/RGF5 and RGF10/CLELN; these interactions trigger the formation of heterodimers with SERK1, SERK2 or BAK1/SERK3 via LRR regions. In terms of processing, phosphorylated and ubiquitinated upon interaction with RGF1, thus leading to activation a subsequent degradation. Autophosphorylated. Expressed in roots.

Its subcellular location is the cell membrane. It catalyses the reaction L-seryl-[protein] + ATP = O-phospho-L-seryl-[protein] + ADP + H(+). It carries out the reaction L-threonyl-[protein] + ATP = O-phospho-L-threonyl-[protein] + ADP + H(+). Functionally, together with RGI1, RGI2, RGI4 and RGI5, acts as a receptor of RGF peptides (e.g. RGF1, GLV5/CLEL1/RGF2, GLV7/CLEL3/RGF3, GLV3/RGF4, GLV10/CLEL7/RGF5 and RGF10/CLELN), peptide hormones which maintain the postembryonic root stem cell niche by regulating the expression levels and patterns of the transcription factor PLETHORA (PLT, e.g. PLT1 and PLT2). Links RGF peptides signal with their downstream components. This Arabidopsis thaliana (Mouse-ear cress) protein is LRR receptor-like serine/threonine-protein kinase RGI3.